Reading from the N-terminus, the 187-residue chain is Small ribosomal subunit protein uS10m (187 aa).

This sequence belongs to the universal ribosomal protein uS10 family. In terms of assembly, component of the mitochondrial ribosome small subunit (28S) which comprises a 12S rRNA and about 30 distinct proteins.

It localises to the mitochondrion. The sequence is that of Small ribosomal subunit protein uS10m (mrps10) from Danio rerio (Zebrafish).